The chain runs to 189 residues: GMP synthase [glutamine-hydrolyzing] subunit A (189 aa).

Residues 1-189 form the Glutamine amidotransferase type-1 domain; it reads MIVILNNGGQ…CKKCGFEFEE (189 aa). Catalysis depends on cysteine 76, which acts as the Nucleophile. Residues histidine 163 and glutamate 165 contribute to the active site.

As to quaternary structure, heterodimer composed of a glutamine amidotransferase subunit (A) and a GMP-binding subunit (B).

The catalysed reaction is XMP + L-glutamine + ATP + H2O = GMP + L-glutamate + AMP + diphosphate + 2 H(+). It participates in purine metabolism; GMP biosynthesis; GMP from XMP (L-Gln route): step 1/1. Catalyzes the synthesis of GMP from XMP. The protein is GMP synthase [glutamine-hydrolyzing] subunit A of Methanococcus maripaludis (strain C7 / ATCC BAA-1331).